Here is a 3563-residue protein sequence, read N- to C-terminus: D-lysergyl-peptide-synthetase subunit 1 (3563 aa).

Residues 307-706 form an adenylation (A) domain 1 region; the sequence is SCSPRPNPQA…LGRKDDQVKI (400 aa). In terms of domain architecture, Carrier 1 spans 844-921; the sequence is EPKSDREKLL…EIVIVSTSAT (78 aa). Ser881 carries the O-(pantetheine 4'-phosphoryl)serine modification. The interval 963-1354 is condensation (C) domain 1; it reads EDIYPCTHLQ…EHILTEIHSN (392 aa). The adenylation (A) domain 2 stretch occupies residues 1397–1804; sequence QEKCQAQPDA…RRKDAQVKIR (408 aa). A Carrier 2 domain is found at 1944 to 2020; the sequence is PPSNATEHEI…KLALARGVTQ (77 aa). An O-(pantetheine 4'-phosphoryl)serine modification is found at Ser1981. Residues 2067–2486 are condensation (C) domain 2; the sequence is ERIYPCSPIQ…ALPVLDEDQM (420 aa). Positions 2511–2909 are adenylation (A) domain 3; sequence QCIRCPDSPS…GRNDDQVKVR (399 aa). The Carrier 3 domain occupies 3025 to 3104; it reads PPRTALEAEL…RFGSYRRAGA (80 aa). Ser3064 is modified (O-(pantetheine 4'-phosphoryl)serine). Residues 3166–3451 form a cyclization (Cyc) domain region; sequence LYFSKPMASE…VAKSTTWSSD (286 aa).

It belongs to the NRP synthetase family.

The protein operates within alkaloid biosynthesis; ergot alkaloid biosynthesis. In terms of biological role, D-lysergyl-peptide-synthetase subunit 1; part of the gene cluster that mediates the biosynthesis of fungal ergot alkaloid. DmaW catalyzes the first step of ergot alkaloid biosynthesis by condensing dimethylallyl diphosphate (DMAP) and tryptophan to form 4-dimethylallyl-L-tryptophan. The second step is catalyzed by the methyltransferase easF that methylates 4-dimethylallyl-L-tryptophan in the presence of S-adenosyl-L-methionine, resulting in the formation of 4-dimethylallyl-L-abrine. The catalase easC and the FAD-dependent oxidoreductase easE then transform 4-dimethylallyl-L-abrine to chanoclavine-I which is further oxidized by easD in the presence of NAD(+), resulting in the formation of chanoclavine-I aldehyde. Agroclavine dehydrogenase easG then mediates the conversion of chanoclavine-I aldehyde to agroclavine via a non-enzymatic adduct reaction: the substrate is an iminium intermediate that is formed spontaneously from chanoclavine-I aldehyde in the presence of glutathione. The presence of easA is not required to complete this reaction. Further conversion of agroclavine to paspalic acid is a two-step process involving oxidation of agroclavine to elymoclavine and of elymoclavine to paspalic acid, the second step being performed by the elymoclavine oxidase cloA. Paspalic acid is then further converted to D-lysergic acid. Ergopeptines are assembled from D-lysergic acid and three different amino acids by the D-lysergyl-peptide-synthetases composed each of a monomudular and a trimodular nonribosomal peptide synthetase subunit. LpsB and lpsC encode the monomodular subunits responsible for D-lysergic acid activation and incorporation into the ergopeptine backbone. LpsA1 and A2 subunits encode the trimodular nonribosomal peptide synthetase assembling the tripeptide portion of ergopeptines. LpsA1 is responsible for formation of the major ergopeptine, ergotamine, and lpsA2 for alpha-ergocryptine, the minor ergopeptine of the total alkaloid mixture elaborated by C.purpurea. D-lysergyl-tripeptides are assembled by the nonribosomal peptide synthetases and released as N-(D-lysergyl-aminoacyl)-lactams. Cyclolization of the D-lysergyl-tripeptides is performed by the Fe(2+)/2-ketoglutarate-dependent dioxygenase easH which introduces a hydroxyl group into N-(D-lysergyl-aminoacyl)-lactam at alpha-C of the aminoacyl residue followed by spontaneous condensation with the terminal lactam carbonyl group. The sequence is that of D-lysergyl-peptide-synthetase subunit 1 from Claviceps purpurea (Ergot fungus).